A 473-amino-acid polypeptide reads, in one-letter code: MKILYSLRRYFHVETLFNGTLALGGRDQESTGFAWWAGNARLINLSGKLLGAHVAHAGLIVFWAGAMNLFEVAHFVPEKPMYEQGLILLPHLATLGWGIGPGGEVINTFPYFVSGVLHLISSAVLGFGGVYHALIGPETLEESFPFFGYVWKDKNKMTTILGIHLILLGAGALLLVAKAIWFGGLYDTWAPGGGDVRKITNITLNPSTIFGYLLKSPFGGEGWIVSVDNMEDIVGGHVWLGIICIFGGIWHILTKPFAWARRAFVWSGEAYLSYSLAAISLMGFIACCFVWFNNTAYPSEFYGPTGPEASQAQAFSFLVRDQRLGANVGSAQGPTGLGKYLMRSPTGEIIFGGETMRFWDLRAPWLEPLRGPNGLDLSKLKKDIQPWQERRSAEYMTHAPLGSLNSVGGVATEINAVNYVSPRSWLSTSHFVLGFFFFVGHLWHAGRARAAAAGFEKGIDRDSEPVLYMEPLN.

Positions 1 to 14 (MKILYSLRRYFHVE) are excised as a propeptide. Thr15 bears the N-acetylthreonine mark. Thr15 carries the phosphothreonine modification. 5 consecutive transmembrane segments (helical) span residues 69-93 (LFEVAHFVPEKPMYEQGLILLPHLA), 134-155 (LIGPETLEESFPFFGYVWKDKN), 178-200 (KAIWFGGLYDTWAPGGGDVRKIT), 255-275 (KPFAWARRAFVWSGEAYLSYS), and 291-312 (WFNNTAYPSEFYGPTGPEASQA). A [CaMn4O5] cluster-binding site is contributed by Glu367. The helical transmembrane segment at 447–471 (RARAAAAGFEKGIDRDSEPVLYMEP) threads the bilayer.

It belongs to the PsbB/PsbC family. PsbC subfamily. As to quaternary structure, PSII is composed of 1 copy each of membrane proteins PsbA, PsbB, PsbC, PsbD, PsbE, PsbF, PsbH, PsbI, PsbJ, PsbK, PsbL, PsbM, PsbT, PsbX, PsbY, PsbZ, Psb30/Ycf12, at least 3 peripheral proteins of the oxygen-evolving complex and a large number of cofactors. It forms dimeric complexes. The cofactor is Binds multiple chlorophylls and provides some of the ligands for the Ca-4Mn-5O cluster of the oxygen-evolving complex. It may also provide a ligand for a Cl- that is required for oxygen evolution. PSII binds additional chlorophylls, carotenoids and specific lipids..

The protein resides in the plastid. Its subcellular location is the chloroplast thylakoid membrane. Functionally, one of the components of the core complex of photosystem II (PSII). It binds chlorophyll and helps catalyze the primary light-induced photochemical processes of PSII. PSII is a light-driven water:plastoquinone oxidoreductase, using light energy to abstract electrons from H(2)O, generating O(2) and a proton gradient subsequently used for ATP formation. The chain is Photosystem II CP43 reaction center protein from Chara vulgaris (Common stonewort).